Here is a 236-residue protein sequence, read N- to C-terminus: Small ribosomal subunit protein uS2c (236 aa).

This sequence belongs to the universal ribosomal protein uS2 family.

It localises to the plastid. The protein localises to the chloroplast. The protein is Small ribosomal subunit protein uS2c (rps2) of Panax ginseng (Korean ginseng).